A 1693-amino-acid chain; its full sequence is Latrophilin Cirl (1693 aa).

Topologically, residues 1–753 (MLPTILSISY…LFTMFDGNMR (753 aa)) are extracellular. The SUEL-type lectin domain maps to 25–114 (ACEGKKLTIE…KYLEAHYQCI (90 aa)). Asn-142 carries N-linked (GlcNAc...) asparagine glycosylation. Polar residues-rich tracts occupy residues 185 to 198 (TAVT…STTA) and 256 to 265 (NVTSPSNTRI). Positions 185–299 (TAVTHSTPWS…PGTAASGSVA (115 aa)) are disordered. Residue Asn-256 is glycosylated (N-linked (GlcNAc...) asparagine). Residues 275–299 (DDGTLLTTKSSPNRPPGTAASGSVA) are compositionally biased toward low complexity. Residues Asn-301, Asn-340, Asn-397, Asn-641, Asn-689, and Asn-716 are each glycosylated (N-linked (GlcNAc...) asparagine). The disordered stretch occupies residues 375 to 399 (YDEYDDDASSTTPAPSGGDCLHNSS). In terms of domain architecture, GAIN-B spans 564–740 (KKSKIYSSVV…AILMDVVDEH (177 aa)). Cystine bridges form between Cys-695-Cys-722 and Cys-710-Cys-724. Residues 695–740 (CVFWNYIDHAWSANGCSLESTNRTHSVCSCNHLTNFAILMDVVDEH) are GPS. The chain crosses the membrane as a helical span at residues 754–774 (IFIYISIGICVVFIVIALLTL). Over 775–787 (KLFNGVFVKSART) the chain is Cytoplasmic. Residues 788-808 (SIYTSIYLCLLAIELLFLLGI) form a helical membrane-spanning segment. At 809-814 (EQTETS) the chain is on the extracellular side. A helical membrane pass occupies residues 815–835 (IFCGFITIFLHCAILSGTAWF). Residues 836 to 861 (CYEAFHSYSTLTSDELLLEVDQTPKV) lie on the Cytoplasmic side of the membrane. A helical membrane pass occupies residues 862-882 (NCYYLLSYGLSLSVVAISLVI). Over 883–906 (DPSTYTQNDYCVLMEANALFYATF) the chain is Extracellular. A helical transmembrane segment spans residues 907–927 (VVPVLVFFVAAIGYTFLSWII). The Cytoplasmic segment spans residues 928–954 (MCRKSRTGLKTKEHTRLASVRFDIRCS). A helical membrane pass occupies residues 955–975 (FVFLLLLSAVWCSAYFYLRGA). Residues 976–985 (KMDDDTADVY) lie on the Extracellular side of the membrane. A helical membrane pass occupies residues 986–1006 (GYCFICFNTLLGLYIFVFHCI). The Cytoplasmic portion of the chain corresponds to 1007 to 1693 (QNEKIRREYR…VRCYLEPLAK (687 aa)). Position 1142 is a phosphoserine (Ser-1142). Disordered stretches follow at residues 1156-1194 (HKQQ…LKTP), 1220-1247 (KPNS…LHSR), 1294-1319 (QQQL…AEQH), 1433-1521 (GGGS…SDER), and 1601-1673 (LAVN…QQRH). Ser-1239 and Ser-1246 each carry phosphoserine. The segment covering 1294-1309 (QQQLRRQQLHQQQQQL) has biased composition (low complexity). Phosphoserine occurs at positions 1310 and 1311. Residues 1439-1464 (GGSVSSRSQQQQLKKQQQQQSLAQQR) show a composition bias toward low complexity. 2 stretches are compositionally biased toward acidic residues: residues 1472-1486 (DDDD…EEAT) and 1496-1507 (CDEDEEEDESDL). A compositionally biased stretch (basic and acidic residues) spans 1508–1521 (EHDAHGLPPQSDER). Low complexity predominate over residues 1630–1655 (LQKLSPQSTTSSSSHTSHSNPNLHPH). A compositionally biased stretch (basic residues) spans 1656 to 1672 (QLTHPHPHQHPPHHQQR).

The protein belongs to the G-protein coupled receptor 2 family. LN-TM7 subfamily. In terms of assembly, forms a heterodimer, consisting of a large extracellular region non-covalently linked to a seven-transmembrane moiety. In terms of processing, proteolytically cleaved into 2 subunits, an extracellular subunit and a seven-transmembrane subunit.

The protein resides in the cell membrane. The polypeptide is Latrophilin Cirl (Drosophila sechellia (Fruit fly)).